The primary structure comprises 458 residues: Ig mu chain C region secreted form (458 aa).

The tract at residues 1-106 is CH1; the sequence is VSLSSPTLYP…SNRDLRVSFP (106 aa). A disulfide bridge links C28 with C90. N-linked (GlcNAc...) asparagine glycans are attached at residues N46 and N114. A CH2 region spans residues 107-222; that stretch reads VDSELPPNVS…VSMSSECSTT (116 aa). An intrachain disulfide couples C137 to C200. 4 N-linked (GlcNAc...) asparagine glycosylation sites follow: N212, N261, N277, and N284. A CH3 region spans residues 223 to 327; sequence PSPGIQVFPI…PLKHTISKSR (105 aa). 2 disulfides stabilise this stretch: C249–C308 and C356–C418. The interval 328–458 is CH4; that stretch reads EVAKHPPAVY…IMSDTASTCY (131 aa). N445 carries N-linked (GlcNAc...) asparagine glycosylation.

Its subcellular location is the secreted. The chain is Ig mu chain C region secreted form from Oryctolagus cuniculus (Rabbit).